Here is a 256-residue protein sequence, read N- to C-terminus: Small ribosomal subunit protein eS1 (256 aa).

Position 2 is an N-acetylalanine; partial (alanine 2).

This sequence belongs to the eukaryotic ribosomal protein eS1 family. As to quaternary structure, component of the small ribosomal subunit. Mature ribosomes consist of a small (40S) and a large (60S) subunit. The 40S subunit contains about 33 different proteins and 1 molecule of RNA (18S). The 60S subunit contains about 49 different proteins and 3 molecules of RNA (25S, 5.8S and 5S).

It is found in the cytoplasm. The protein is Small ribosomal subunit protein eS1 of Laccaria bicolor (strain S238N-H82 / ATCC MYA-4686) (Bicoloured deceiver).